Consider the following 373-residue polypeptide: Probable tRNA sulfurtransferase (373 aa).

The region spanning 54-158 is the THUMP domain; that stretch reads NKNIEELSKV…NDVAYFYYKI (105 aa). Residues 176–177, 201–202, lysine 256, glycine 278, and glutamine 287 contribute to the ATP site; these read LF and NF.

The protein belongs to the ThiI family.

The protein localises to the cytoplasm. The enzyme catalyses [ThiI sulfur-carrier protein]-S-sulfanyl-L-cysteine + a uridine in tRNA + 2 reduced [2Fe-2S]-[ferredoxin] + ATP + H(+) = [ThiI sulfur-carrier protein]-L-cysteine + a 4-thiouridine in tRNA + 2 oxidized [2Fe-2S]-[ferredoxin] + AMP + diphosphate. The catalysed reaction is [ThiS sulfur-carrier protein]-C-terminal Gly-Gly-AMP + S-sulfanyl-L-cysteinyl-[cysteine desulfurase] + AH2 = [ThiS sulfur-carrier protein]-C-terminal-Gly-aminoethanethioate + L-cysteinyl-[cysteine desulfurase] + A + AMP + 2 H(+). Its pathway is cofactor biosynthesis; thiamine diphosphate biosynthesis. Catalyzes the ATP-dependent transfer of a sulfur to tRNA to produce 4-thiouridine in position 8 of tRNAs, which functions as a near-UV photosensor. Also catalyzes the transfer of sulfur to the sulfur carrier protein ThiS, forming ThiS-thiocarboxylate. This is a step in the synthesis of thiazole, in the thiamine biosynthesis pathway. The sulfur is donated as persulfide by IscS. This chain is Probable tRNA sulfurtransferase, found in Saccharolobus islandicus (strain Y.N.15.51 / Yellowstone #2) (Sulfolobus islandicus).